The primary structure comprises 294 residues: Bifunctional protein FolD (294 aa).

NADP(+)-binding positions include Gly-166–Ser-168, Ser-195, and Ile-236.

Belongs to the tetrahydrofolate dehydrogenase/cyclohydrolase family. In terms of assembly, homodimer.

It catalyses the reaction (6R)-5,10-methylene-5,6,7,8-tetrahydrofolate + NADP(+) = (6R)-5,10-methenyltetrahydrofolate + NADPH. The catalysed reaction is (6R)-5,10-methenyltetrahydrofolate + H2O = (6R)-10-formyltetrahydrofolate + H(+). It participates in one-carbon metabolism; tetrahydrofolate interconversion. Its function is as follows. Catalyzes the oxidation of 5,10-methylenetetrahydrofolate to 5,10-methenyltetrahydrofolate and then the hydrolysis of 5,10-methenyltetrahydrofolate to 10-formyltetrahydrofolate. The polypeptide is Bifunctional protein FolD (Chloroherpeton thalassium (strain ATCC 35110 / GB-78)).